The primary structure comprises 80 residues: MPKRILQGTVTSDKNEQTVTVLVERRFKHPLLKKTVRLSKKYRAHDPENQFKVGDVVRIEECAPISKTKRWKVVTEAVTA.

The protein belongs to the universal ribosomal protein uS17 family. In terms of assembly, part of the 30S ribosomal subunit.

In terms of biological role, one of the primary rRNA binding proteins, it binds specifically to the 5'-end of 16S ribosomal RNA. In Cereibacter sphaeroides (strain ATCC 17025 / ATH 2.4.3) (Rhodobacter sphaeroides), this protein is Small ribosomal subunit protein uS17.